We begin with the raw amino-acid sequence, 445 residues long: Phosphoglucosamine mutase (445 aa).

The active-site Phosphoserine intermediate is the Ser99. Residues Ser99, Asp242, Asp244, and Asp246 each coordinate Mg(2+). Residue Ser99 is modified to Phosphoserine.

Belongs to the phosphohexose mutase family. It depends on Mg(2+) as a cofactor. In terms of processing, activated by phosphorylation.

It carries out the reaction alpha-D-glucosamine 1-phosphate = D-glucosamine 6-phosphate. Functionally, catalyzes the conversion of glucosamine-6-phosphate to glucosamine-1-phosphate. The chain is Phosphoglucosamine mutase from Nitratiruptor sp. (strain SB155-2).